The following is a 781-amino-acid chain: MSSSCNVGASAGGGGSVVMETSNFAHVIFQNVGKSFLPQAALECHYTLTPFITPHPKDWVGIFKVGWSSARDYYTFLWSPMPENYTEGSTVHRTIIFQGYYVPRSDGEFYQFCYVTHTGEIRGASTPFQFRPATPTGEELLTVEDDGNSDILVRVEEVQQECKELQKALRLLTQERDQLQEKQRQQNQELQKSLIEEKEEAQSRVRQLEQDLLKITQKAVLKETELDCLRDKLQKVISERDSLQTQLKNERDERELYKSHVRSAELENTKLSAELQMLKAVELNREVTIAQYQEELHRLRTERDTHPAETGLKEQLRQAEEQLQATRQQAAMLGSELRDASGGRDRTMTELYRVRQEAEELRAHLAEAQEECRHAQDQLDRMKNQTSQEMGRAGGGVGVASELEAELQKEVEELKLRLNMAAEHYKEKYRECQRLRRQVTKLTQQQETQQGDANRNDASTETTLELHTPDAETPSESYPAEIKTVARDVEKSRDEEGNEQEEEDEEEEECSLSVEAELACMEEKWREQCTINENLKLLLANEEKRFKTQVAEKDREVSALRESLVVVTKEKERLEKQYMREGTTRSRRLEVREPVVLRYPLPYPQDPPPLPLVPQQPAELQFGNPYLEQETRDGADGALSPEQTCRPPPLAPPPWGGPVVCSQPSRSLSPPDGLENPTEERPTGGDGEAPAVCEHQSLESNESHTSFCFDTRPDVHKQCPLCEVIFPPHFEQSSFERHVESHWRVCPVCSEQFPLDCQQQLYEKHVHTHFDGNVLNFDNFD.

Coiled coils occupy residues 148–453 (NSDI…QGDA) and 488–581 (DVEK…YMRE). Positions 441-465 (KLTQQQETQQGDANRNDASTETTLE) are enriched in polar residues. 2 disordered regions span residues 441-510 (KLTQ…EEEC) and 630-691 (ETRD…EAPA). The segment covering 484–495 (TVARDVEKSRDE) has biased composition (basic and acidic residues). The segment covering 496 to 510 (EGNEQEEEDEEEEEC) has biased composition (acidic residues). The segment covering 646–656 (RPPPLAPPPWG) has biased composition (pro residues). 2 consecutive UBZ1-type zinc fingers follow at residues 716–742 (HKQCPLCEVIFPPHFEQSSFERHVESH) and 743–769 (WRVCPVCSEQFPLDCQQQLYEKHVHTH). Zn(2+)-binding residues include C719, C722, H738, H742, C746, C749, H765, and H769.

Little expression is observed during pectoral fin development, except for an elevated level of expression in the distal mesenchyme cells of some samples.

May have anti-apoptotic activity. This chain is Tax1-binding protein 1 homolog A, found in Danio rerio (Zebrafish).